Here is a 602-residue protein sequence, read N- to C-terminus: NADH-quinone oxidoreductase subunit C/D (602 aa).

Positions 1–192 are NADH dehydrogenase I subunit C; sequence MVNNMTDLTA…DPFELTKAKQ (192 aa). Residues 216–602 form an NADH dehydrogenase I subunit D region; that stretch reads DFMFLNLGPN…IDFVMSDVDR (387 aa).

This sequence in the N-terminal section; belongs to the complex I 30 kDa subunit family. In the C-terminal section; belongs to the complex I 49 kDa subunit family. In terms of assembly, NDH-1 is composed of 13 different subunits. Subunits NuoB, CD, E, F, and G constitute the peripheral sector of the complex.

It localises to the cell inner membrane. It catalyses the reaction a quinone + NADH + 5 H(+)(in) = a quinol + NAD(+) + 4 H(+)(out). Functionally, NDH-1 shuttles electrons from NADH, via FMN and iron-sulfur (Fe-S) centers, to quinones in the respiratory chain. The immediate electron acceptor for the enzyme in this species is believed to be ubiquinone. Couples the redox reaction to proton translocation (for every two electrons transferred, four hydrogen ions are translocated across the cytoplasmic membrane), and thus conserves the redox energy in a proton gradient. This chain is NADH-quinone oxidoreductase subunit C/D, found in Klebsiella pneumoniae subsp. pneumoniae (strain ATCC 700721 / MGH 78578).